A 185-amino-acid polypeptide reads, in one-letter code: ATP synthase subunit b, cyanelle (185 aa).

A helical membrane pass occupies residues 36 to 58 (LINLLVIFFLLIYQGRPFFTALL).

The protein belongs to the ATPase B chain family. In terms of assembly, F-type ATPases have 2 components, F(1) - the catalytic core - and F(0) - the membrane proton channel. F(1) has five subunits: alpha(3), beta(3), gamma(1), delta(1), epsilon(1). F(0) has four main subunits: a(1), b(1), b'(1) and c(10-14). The alpha and beta chains form an alternating ring which encloses part of the gamma chain. F(1) is attached to F(0) by a central stalk formed by the gamma and epsilon chains, while a peripheral stalk is formed by the delta, b and b' chains.

Its subcellular location is the plastid. The protein localises to the cyanelle thylakoid membrane. Functionally, f(1)F(0) ATP synthase produces ATP from ADP in the presence of a proton or sodium gradient. F-type ATPases consist of two structural domains, F(1) containing the extramembraneous catalytic core and F(0) containing the membrane proton channel, linked together by a central stalk and a peripheral stalk. During catalysis, ATP synthesis in the catalytic domain of F(1) is coupled via a rotary mechanism of the central stalk subunits to proton translocation. Component of the F(0) channel, it forms part of the peripheral stalk, linking F(1) to F(0). The sequence is that of ATP synthase subunit b, cyanelle from Cyanophora paradoxa.